Here is a 166-residue protein sequence, read N- to C-terminus: UBA-like domain-containing protein 2 (166 aa).

Residues 120–166 (QQPVWLPPASPTTHLHHHHHHPQPVWPPNSQPTGGPQKAMAAMDGQR) are disordered.

It belongs to the UBALD family.

This chain is UBA-like domain-containing protein 2 (ubald2), found in Xenopus tropicalis (Western clawed frog).